The following is a 162-amino-acid chain: MRCPFCQFEGLKVTDSRDAMEMNAIRRRRECLNCLKRFTTFETIELTVQVQKRDGTYEDFQQHKLINGLAAACRHTKISHDQVISLAAQMTNELMQSQIQQISTTQLGEMAMKHLQSLDPIAYIRFACVYKRFKDLGELEEAIKTIQSKDEDKSCSILKDLL.

A zinc finger spans residues 3–34 (CPFCQFEGLKVTDSRDAMEMNAIRRRRECLNC). One can recognise an ATP-cone domain in the interval 48–138 (VQVQKRDGTY…VYKRFKDLGE (91 aa)).

This sequence belongs to the NrdR family. Zn(2+) serves as cofactor.

In terms of biological role, negatively regulates transcription of bacterial ribonucleotide reductase nrd genes and operons by binding to NrdR-boxes. This Protochlamydia amoebophila (strain UWE25) protein is Transcriptional repressor NrdR.